We begin with the raw amino-acid sequence, 270 residues long: Putative phosphoenolpyruvate synthase regulatory protein (270 aa).

150–157 is an ADP binding site; that stretch reads GVSRCGKT.

The protein belongs to the pyruvate, phosphate/water dikinase regulatory protein family. PSRP subfamily.

It catalyses the reaction [pyruvate, water dikinase] + ADP = [pyruvate, water dikinase]-phosphate + AMP + H(+). The enzyme catalyses [pyruvate, water dikinase]-phosphate + phosphate + H(+) = [pyruvate, water dikinase] + diphosphate. In terms of biological role, bifunctional serine/threonine kinase and phosphorylase involved in the regulation of the phosphoenolpyruvate synthase (PEPS) by catalyzing its phosphorylation/dephosphorylation. The polypeptide is Putative phosphoenolpyruvate synthase regulatory protein (Shewanella sediminis (strain HAW-EB3)).